A 321-amino-acid chain; its full sequence is Glyoxylate/hydroxypyruvate reductase B (321 aa).

Catalysis depends on residues R237 and E266. H285 (proton donor) is an active-site residue.

The protein belongs to the D-isomer specific 2-hydroxyacid dehydrogenase family. GhrB subfamily. Homodimer.

It localises to the cytoplasm. The catalysed reaction is glycolate + NADP(+) = glyoxylate + NADPH + H(+). It catalyses the reaction (R)-glycerate + NAD(+) = 3-hydroxypyruvate + NADH + H(+). It carries out the reaction (R)-glycerate + NADP(+) = 3-hydroxypyruvate + NADPH + H(+). In terms of biological role, catalyzes the NADPH-dependent reduction of glyoxylate and hydroxypyruvate into glycolate and glycerate, respectively. The sequence is that of Glyoxylate/hydroxypyruvate reductase B from Erwinia tasmaniensis (strain DSM 17950 / CFBP 7177 / CIP 109463 / NCPPB 4357 / Et1/99).